Here is a 232-residue protein sequence, read N- to C-terminus: Imidazoleglycerol-phosphate dehydratase (232 aa).

Belongs to the imidazoleglycerol-phosphate dehydratase family.

It catalyses the reaction D-erythro-1-(imidazol-4-yl)glycerol 3-phosphate = 3-(imidazol-4-yl)-2-oxopropyl phosphate + H2O. It participates in amino-acid biosynthesis; L-histidine biosynthesis; L-histidine from 5-phospho-alpha-D-ribose 1-diphosphate: step 6/9. In Lachancea kluyveri (strain ATCC 58438 / CBS 3082 / BCRC 21498 / NBRC 1685 / JCM 7257 / NCYC 543 / NRRL Y-12651) (Yeast), this protein is Imidazoleglycerol-phosphate dehydratase (HIS3).